We begin with the raw amino-acid sequence, 1231 residues long: S-layer protein A (1231 aa).

Residues 1-35 (MNKTLGLILTSVFLLSTLGIITGFVIPTQAANSND) form the signal peptide.

The protein belongs to the Sulfolobales SlaA family. The mushroom-shaped unit cells of the Sulfolobales' S-layers may consist of three SlaB subunits and six SlaA subunits.

The protein resides in the secreted. It is found in the cell wall. The protein localises to the S-layer. Its function is as follows. S-layer large protein. May form the highly ordered outer sheath. This is S-layer protein A from Saccharolobus solfataricus (strain ATCC 35092 / DSM 1617 / JCM 11322 / P2) (Sulfolobus solfataricus).